Here is a 383-residue protein sequence, read N- to C-terminus: MTTEGVRTVGVEEEFVLVDPDRHAVRAAASRVLARGDRDGAGGPPGGADPDGDLDGDLDVELTREQVESGSAPHTSLAGLRGSLVGLRRAAARAAEAAGVALAATATCPTPTRPTITPKPRYERMRGEFGLTAREQLTCGCHVHVAVHSRQEAVGALDRLRPWLSVLVAMTANSPFWQGADSGYASYRTQVWQRWPTAGATGAFGSPAEYDRVVDLLIRTGAAMDDGMIYFDVRLSHHYPTLELRVADVCLSVDDSVLLAALARALVATAARQWAAGEPVPTVRPELLRAAGWRASRHGVSGELVDLERGELVPARALVDRFVEWVGPELSATGDGDAVAALVDNLFARGTGADRQRAAYARRGRIDDVVDLVIRETTTMASP.

The tract at residues 35-56 (RGDRDGAGGPPGGADPDGDLDG) is disordered.

The protein belongs to the glutamate--cysteine ligase type 2 family. YbdK subfamily.

It carries out the reaction L-cysteine + L-glutamate + ATP = gamma-L-glutamyl-L-cysteine + ADP + phosphate + H(+). In terms of biological role, ATP-dependent carboxylate-amine ligase which exhibits weak glutamate--cysteine ligase activity. This Frankia alni (strain DSM 45986 / CECT 9034 / ACN14a) protein is Putative glutamate--cysteine ligase 2-2.